A 101-amino-acid chain; its full sequence is Small ribosomal subunit protein uS14 (101 aa).

The segment at Gln-49–Pro-70 is disordered. Over residues Pro-52–Gly-68 the composition is skewed to polar residues.

This sequence belongs to the universal ribosomal protein uS14 family. As to quaternary structure, part of the 30S ribosomal subunit. Contacts proteins S3 and S10.

Its function is as follows. Binds 16S rRNA, required for the assembly of 30S particles and may also be responsible for determining the conformation of the 16S rRNA at the A site. The protein is Small ribosomal subunit protein uS14 of Yersinia pseudotuberculosis serotype O:1b (strain IP 31758).